A 136-amino-acid chain; its full sequence is Small ribosomal subunit protein uS12 (136 aa).

The residue at position 89 (aspartate 89) is a 3-methylthioaspartic acid. The segment at 101–136 (SLDTSGVADRKQSRSKYGAKQPKAGVPAPVKGKGKR) is disordered.

It belongs to the universal ribosomal protein uS12 family. As to quaternary structure, part of the 30S ribosomal subunit. Contacts proteins S8 and S17. May interact with IF1 in the 30S initiation complex.

Its function is as follows. With S4 and S5 plays an important role in translational accuracy. Interacts with and stabilizes bases of the 16S rRNA that are involved in tRNA selection in the A site and with the mRNA backbone. Located at the interface of the 30S and 50S subunits, it traverses the body of the 30S subunit contacting proteins on the other side and probably holding the rRNA structure together. The combined cluster of proteins S8, S12 and S17 appears to hold together the shoulder and platform of the 30S subunit. This chain is Small ribosomal subunit protein uS12, found in Pelodictyon phaeoclathratiforme (strain DSM 5477 / BU-1).